The following is a 92-amino-acid chain: Small ribosomal subunit protein bS20 (92 aa).

The disordered stretch occupies residues 1 to 25 (MANSAQARKRARQAAKANSHNSALR).

Belongs to the bacterial ribosomal protein bS20 family.

Functionally, binds directly to 16S ribosomal RNA. The polypeptide is Small ribosomal subunit protein bS20 (Burkholderia mallei (strain NCTC 10247)).